The following is a 959-amino-acid chain: Glycine dehydrogenase (decarboxylating) (959 aa).

Lys708 is modified (N6-(pyridoxal phosphate)lysine).

This sequence belongs to the GcvP family. As to quaternary structure, the glycine cleavage system is composed of four proteins: P, T, L and H. Pyridoxal 5'-phosphate is required as a cofactor.

The enzyme catalyses N(6)-[(R)-lipoyl]-L-lysyl-[glycine-cleavage complex H protein] + glycine + H(+) = N(6)-[(R)-S(8)-aminomethyldihydrolipoyl]-L-lysyl-[glycine-cleavage complex H protein] + CO2. Functionally, the glycine cleavage system catalyzes the degradation of glycine. The P protein binds the alpha-amino group of glycine through its pyridoxal phosphate cofactor; CO(2) is released and the remaining methylamine moiety is then transferred to the lipoamide cofactor of the H protein. This is Glycine dehydrogenase (decarboxylating) from Serratia proteamaculans (strain 568).